The following is a 140-amino-acid chain: Mitochondrial import receptor subunit TOM22 homolog (140 aa).

The span at Met1 to Pro11 shows a compositional bias: low complexity. The tract at residues Met1–Glu40 is disordered. Residues Met1–Ala81 are Cytoplasmic-facing. Ser13 carries the phosphoserine modification. Over residues Lys25–Glu40 the composition is skewed to acidic residues. The segment at Asp39–Gly48 is import sequence; necessary for mitochondrion outer membrane localization and integration in the TOM complex. At Thr41 the chain carries Phosphothreonine. A Phosphoserine modification is found at Ser43. Positions Ala81 to Thr101 are TMD; necessary for mitochondrion outer membrane localization and integration in the TOM complex. Residues Ala82–Thr101 traverse the membrane as a helical segment. The Mitochondrial intermembrane portion of the chain corresponds to Glu102–Ile140. The interval Pro121–Ile140 is C-tail signal; necessary for mitochondrion outer membrane localization and integration in the TOM complex.

Belongs to the Tom22 family. In terms of assembly, forms part of the preprotein translocase complex of the outer mitochondrial membrane (TOM complex) which consists of at least 7 different proteins (TOMM5, TOMM6, TOMM7, TOMM20, TOMM22, TOMM40 and TOMM70). Interacts with PPP2R2B and TOMM40.

The protein resides in the mitochondrion outer membrane. Functionally, central receptor component of the translocase of the outer membrane of mitochondria (TOM complex) responsible for the recognition and translocation of cytosolically synthesized mitochondrial preproteins. Together with the peripheral receptor TOM20 functions as the transit peptide receptor and facilitates the movement of preproteins into the translocation pore. Required for the translocation across the mitochondrial outer membrane of cytochrome P450 monooxygenases. The sequence is that of Mitochondrial import receptor subunit TOM22 homolog (TOMM22) from Bos taurus (Bovine).